A 422-amino-acid polypeptide reads, in one-letter code: Mitochondrial distribution and morphology protein 12 (422 aa).

The SMP-LTD domain maps to 1–386 (MSFDINWNQL…WPSWICIDMN (386 aa)). 2 disordered regions span residues 74 to 134 (GATN…HDLG) and 387 to 422 (DDGDDDDDDEVEDSNVSDGDGKDNDGKHGDGPTHEV). Acidic residues-rich tracts occupy residues 109-130 (FDDDDDDDEGVDEDDDDDEYDD) and 387-401 (DDGDDDDDDEVEDSN). The span at 405-422 (GDGKDNDGKHGDGPTHEV) shows a compositional bias: basic and acidic residues.

This sequence belongs to the MDM12 family. Component of the ER-mitochondria encounter structure (ERMES) or MDM complex, composed of MMM1, MDM10, MDM12 and MDM34. An MMM1 homodimer associates with one molecule of MDM12 on each side in a pairwise head-to-tail manner, and the SMP-LTD domains of MMM1 and MDM12 generate a continuous hydrophobic tunnel for phospholipid trafficking.

It localises to the mitochondrion outer membrane. The protein resides in the endoplasmic reticulum membrane. Its function is as follows. Component of the ERMES/MDM complex, which serves as a molecular tether to connect the endoplasmic reticulum (ER) and mitochondria. Components of this complex are involved in the control of mitochondrial shape and protein biogenesis, and function in nonvesicular lipid trafficking between the ER and mitochondria. MDM12 is required for the interaction of the ER-resident membrane protein MMM1 and the outer mitochondrial membrane-resident beta-barrel protein MDM10. The MDM12-MMM1 subcomplex functions in the major beta-barrel assembly pathway that is responsible for biogenesis of all mitochondrial outer membrane beta-barrel proteins, and acts in a late step after the SAM complex. The MDM10-MDM12-MMM1 subcomplex further acts in the TOM40-specific pathway after the action of the MDM12-MMM1 complex. Essential for establishing and maintaining the structure of mitochondria and maintenance of mtDNA nucleoids. This chain is Mitochondrial distribution and morphology protein 12, found in Candida dubliniensis (strain CD36 / ATCC MYA-646 / CBS 7987 / NCPF 3949 / NRRL Y-17841) (Yeast).